A 338-amino-acid polypeptide reads, in one-letter code: Glycerol-3-phosphate dehydrogenase [NAD(P)+] (338 aa).

Residues S12, W13, R33, and K110 each coordinate NADPH. The sn-glycerol 3-phosphate site is built by K110, G141, and S143. A145 contributes to the NADPH binding site. The sn-glycerol 3-phosphate site is built by K196, D249, S259, R260, and N261. The Proton acceptor role is filled by K196. NADPH is bound at residue R260. NADPH-binding residues include V284 and E286.

Belongs to the NAD-dependent glycerol-3-phosphate dehydrogenase family.

It is found in the cytoplasm. The enzyme catalyses sn-glycerol 3-phosphate + NAD(+) = dihydroxyacetone phosphate + NADH + H(+). It catalyses the reaction sn-glycerol 3-phosphate + NADP(+) = dihydroxyacetone phosphate + NADPH + H(+). The protein operates within membrane lipid metabolism; glycerophospholipid metabolism. In terms of biological role, catalyzes the reduction of the glycolytic intermediate dihydroxyacetone phosphate (DHAP) to sn-glycerol 3-phosphate (G3P), the key precursor for phospholipid synthesis. This is Glycerol-3-phosphate dehydrogenase [NAD(P)+] from Limosilactobacillus reuteri (strain DSM 20016) (Lactobacillus reuteri).